A 209-amino-acid polypeptide reads, in one-letter code: Large ribosomal subunit protein uL3 (209 aa).

The protein belongs to the universal ribosomal protein uL3 family. In terms of assembly, part of the 50S ribosomal subunit. Forms a cluster with proteins L14 and L19.

Its function is as follows. One of the primary rRNA binding proteins, it binds directly near the 3'-end of the 23S rRNA, where it nucleates assembly of the 50S subunit. The sequence is that of Large ribosomal subunit protein uL3 from Desulfotalea psychrophila (strain LSv54 / DSM 12343).